Here is a 202-residue protein sequence, read N- to C-terminus: Glycerol-3-phosphate acyltransferase (202 aa).

Transmembrane regions (helical) follow at residues 3–23, 61–81, 87–107, 118–138, 144–164, and 167–187; these read NLII…LILA, IATI…LKFL, LLWS…YLLF, GAMI…WVVI, ISSL…FIFN, and LEIH…YKHL.

Belongs to the PlsY family. Probably interacts with PlsX.

The protein localises to the cell inner membrane. The enzyme catalyses an acyl phosphate + sn-glycerol 3-phosphate = a 1-acyl-sn-glycero-3-phosphate + phosphate. The protein operates within lipid metabolism; phospholipid metabolism. In terms of biological role, catalyzes the transfer of an acyl group from acyl-phosphate (acyl-PO(4)) to glycerol-3-phosphate (G3P) to form lysophosphatidic acid (LPA). This enzyme utilizes acyl-phosphate as fatty acyl donor, but not acyl-CoA or acyl-ACP. This chain is Glycerol-3-phosphate acyltransferase, found in Campylobacter jejuni subsp. jejuni serotype O:6 (strain 81116 / NCTC 11828).